We begin with the raw amino-acid sequence, 287 residues long: Protease HtpX (287 aa).

2 consecutive transmembrane segments (helical) span residues 4 to 24 and 33 to 53; these read IFLL…VMSI and GGLL…SLAI. Histidine 139 contributes to the Zn(2+) binding site. The active site involves glutamate 140. Histidine 143 lines the Zn(2+) pocket. Helical transmembrane passes span 154–174 and 195–215; these read LIQG…AGII and AVVF…VAYF. Glutamate 220 serves as a coordination point for Zn(2+).

The protein belongs to the peptidase M48B family. The cofactor is Zn(2+).

The protein resides in the cell inner membrane. The chain is Protease HtpX from Shewanella baltica (strain OS185).